A 400-amino-acid polypeptide reads, in one-letter code: MAKLIVSDLDVKDKKVLIRVDFNVPIKDGKIGDDNRIVAALPTIKYVIEHDGKAILFSHLGRIKSEDDKKGLSLRPVAERLSNLLNKPVTFVPVTEGEQLETAINNMNDGDVLVVENTRFEDVVNGEQVKRESGNDPELGKYWASLGDVYVNDAFGTAHRSHASNVGIASNMDQVAAGFLMEKEIKFLGDAVDNPKHPFVAILGGAKVSDKIGVIDHLISKADKIIIGGGMTYTFYAAKGMGIGNSLVEKDKIELAKSIIEKAGDKLVLPSDSIVAEKFDNDVPSKVVEGSIPDGYMALDIGPKSIEEFEDVLRDAKTVVWNGPMGVFEMSNYAKGTLEIGKFLGTLSDATTIVGGGDSTAAVKQLGVGDKLTHISTGGGASLEYLEGKELPGIAAISEK.

Substrate-binding positions include 21–23 (DFN), arginine 36, 59–62 (HLGR), arginine 119, and arginine 160. ATP contacts are provided by residues lysine 211, glutamate 329, and 356 to 359 (GGDS).

Belongs to the phosphoglycerate kinase family. Monomer.

It is found in the cytoplasm. The catalysed reaction is (2R)-3-phosphoglycerate + ATP = (2R)-3-phospho-glyceroyl phosphate + ADP. The protein operates within carbohydrate degradation; glycolysis; pyruvate from D-glyceraldehyde 3-phosphate: step 2/5. This Lactiplantibacillus plantarum (strain ATCC BAA-793 / NCIMB 8826 / WCFS1) (Lactobacillus plantarum) protein is Phosphoglycerate kinase.